The primary structure comprises 104 residues: Putative membrane protein insertion efficiency factor (104 aa).

A disordered region spans residues 83-104 (SSPTPLAESPDDRTVPHTQETS).

It belongs to the UPF0161 family.

The protein localises to the cell inner membrane. In terms of biological role, could be involved in insertion of integral membrane proteins into the membrane. The protein is Putative membrane protein insertion efficiency factor of Chlamydia trachomatis serovar D (strain ATCC VR-885 / DSM 19411 / UW-3/Cx).